Reading from the N-terminus, the 173-residue chain is ATP synthase subunit b 1 (173 aa).

The chain crosses the membrane as a helical span at residues 15-37 (TFWVTVAVLIFLAFFGRKIVGAI).

The protein belongs to the ATPase B chain family. F-type ATPases have 2 components, F(1) - the catalytic core - and F(0) - the membrane proton channel. F(1) has five subunits: alpha(3), beta(3), gamma(1), delta(1), epsilon(1). F(0) has three main subunits: a(1), b(2) and c(10-14). The alpha and beta chains form an alternating ring which encloses part of the gamma chain. F(1) is attached to F(0) by a central stalk formed by the gamma and epsilon chains, while a peripheral stalk is formed by the delta and b chains.

Its subcellular location is the cell inner membrane. In terms of biological role, f(1)F(0) ATP synthase produces ATP from ADP in the presence of a proton or sodium gradient. F-type ATPases consist of two structural domains, F(1) containing the extramembraneous catalytic core and F(0) containing the membrane proton channel, linked together by a central stalk and a peripheral stalk. During catalysis, ATP synthesis in the catalytic domain of F(1) is coupled via a rotary mechanism of the central stalk subunits to proton translocation. Component of the F(0) channel, it forms part of the peripheral stalk, linking F(1) to F(0). The polypeptide is ATP synthase subunit b 1 (Acidiphilium cryptum (strain JF-5)).